We begin with the raw amino-acid sequence, 89 residues long: UPF0335 protein RPC_3979 (89 aa).

The protein belongs to the UPF0335 family.

In Rhodopseudomonas palustris (strain BisB18), this protein is UPF0335 protein RPC_3979.